Consider the following 240-residue polypeptide: Eukaryotic translation initiation factor 3 subunit K (240 aa).

Positions 41–221 constitute a PCI domain; the sequence is YDKDIVLTIL…TIKTRNIDEK (181 aa).

The protein belongs to the eIF-3 subunit K family. As to quaternary structure, component of the eukaryotic translation initiation factor 3 (eIF-3) complex.

It localises to the cytoplasm. In terms of biological role, component of the eukaryotic translation initiation factor 3 (eIF-3) complex, which is involved in protein synthesis of a specialized repertoire of mRNAs and, together with other initiation factors, stimulates binding of mRNA and methionyl-tRNAi to the 40S ribosome. The eIF-3 complex specifically targets and initiates translation of a subset of mRNAs involved in cell proliferation. The chain is Eukaryotic translation initiation factor 3 subunit K from Caenorhabditis briggsae.